Here is a 439-residue protein sequence, read N- to C-terminus: Enolase 2 (439 aa).

His160 and Glu169 together coordinate substrate. The Proton donor role is filled by Glu212. Mg(2+) is bound by residues Asp247, Glu296, and Asp323. Glu296 and Asp323 together coordinate substrate. Residue Lys348 is the Proton acceptor of the active site. Substrate is bound by residues 375–378 (SHRS) and Lys399.

This sequence belongs to the enolase family. In terms of assembly, homodimer. It depends on Mg(2+) as a cofactor.

The protein resides in the cytoplasm. The catalysed reaction is (2R)-2-phosphoglycerate = phosphoenolpyruvate + H2O. Its pathway is carbohydrate degradation; glycolysis; pyruvate from D-glyceraldehyde 3-phosphate: step 4/5. This Debaryomyces hansenii (strain ATCC 36239 / CBS 767 / BCRC 21394 / JCM 1990 / NBRC 0083 / IGC 2968) (Yeast) protein is Enolase 2 (ENO2).